Consider the following 152-residue polypeptide: MAKLEEKLTEMLEPGVEALGFELVGIEFVRAGKHSILRVFIDHENGITVDDCADVSHQVSAILDVEDPISTEYNLEVSSPGMDRPLFKEKHYIESVGEVVQVRLSMPMDDRRNFKGKVLACENGMVSIEVDGQQFQLAVANIEKGNVVPTFD.

This sequence belongs to the RimP family.

The protein localises to the cytoplasm. Its function is as follows. Required for maturation of 30S ribosomal subunits. This is Ribosome maturation factor RimP from Alteromonas mediterranea (strain DSM 17117 / CIP 110805 / LMG 28347 / Deep ecotype).